Here is a 152-residue protein sequence, read N- to C-terminus: Large ribosomal subunit protein uL22 (152 aa).

This sequence belongs to the universal ribosomal protein uL22 family. Part of the 50S ribosomal subunit.

Functionally, this protein binds specifically to 23S rRNA. It makes multiple contacts with different domains of the 23S rRNA in the assembled 50S subunit and ribosome. In terms of biological role, the globular domain of the protein is located near the polypeptide exit tunnel on the outside of the subunit, while an extended beta-hairpin is found that lines the wall of the exit tunnel in the center of the 70S ribosome. This Nitrosopumilus maritimus (strain SCM1) protein is Large ribosomal subunit protein uL22.